The chain runs to 434 residues: Eukaryotic translation initiation factor 3 subunit E (434 aa).

In terms of domain architecture, PCI spans 219-392 (FFNHPKGRDL…GHVVMGTQPL (174 aa)).

It belongs to the eIF-3 subunit E family. As to quaternary structure, component of the eukaryotic translation initiation factor 3 (eIF-3) complex. The eIF-3 complex interacts with pix. Interacts with mxt.

It localises to the cytoplasm. Functionally, component of the eukaryotic translation initiation factor 3 (eIF-3) complex, which is involved in protein synthesis of a specialized repertoire of mRNAs and, together with other initiation factors, stimulates binding of mRNA and methionyl-tRNAi to the 40S ribosome. The eIF-3 complex specifically targets and initiates translation of a subset of mRNAs involved in cell proliferation. In Drosophila pseudoobscura pseudoobscura (Fruit fly), this protein is Eukaryotic translation initiation factor 3 subunit E (eIF3-S6).